The chain runs to 198 residues: tRNA (pseudouridine(54)-N(1))-methyltransferase (198 aa).

S-adenosyl-L-methionine contacts are provided by residues Leu130, Gly153, 176-181 (LSPLEL), and Cys186.

Belongs to the methyltransferase superfamily. TrmY family. As to quaternary structure, homodimer.

Its subcellular location is the cytoplasm. It catalyses the reaction pseudouridine(54) in tRNA + S-adenosyl-L-methionine = N(1)-methylpseudouridine(54) in tRNA + S-adenosyl-L-homocysteine + H(+). In terms of biological role, specifically catalyzes the N1-methylation of pseudouridine at position 54 (Psi54) in tRNAs. This Methanococcus maripaludis (strain C5 / ATCC BAA-1333) protein is tRNA (pseudouridine(54)-N(1))-methyltransferase.